We begin with the raw amino-acid sequence, 403 residues long: MSQNKKVVLAYSGGLDTSVAVKWLQEQGYEVVACCLDVGEGKDLAFVQQKALQVGAVQSYMIDAKEEFAEEFALTALQAHTMYEGKYPLVSALSRPLIAKKLVEVAEKENAVAVAHGCTGKGNDQVRFEVSIKALNPDLEVLAPVREWKWSRDEEIDYAQKHGIPIPINLDSPYSIDQNLWGRSNECGILEDPWAAPPEGAYDLTTPLEKTPDTPEIIEITFEKGKPTAIDGIQYSLSDLILHLNEVAGQHGVGRIDHVENRLVGIKSREVYECPGAVTLLKAHKELEDLTLVKEVAHFKPIVEQKMAELIYNGLWFSPLKGALDAFLQETQQNVTGVVRVKLFKGHAIVEGRKSPYSLYDENLATYTKADEFDHDAAVGFINLWGLPTKVNSIVNKKEQVKA.

Position 10-18 (10-18 (AYSGGLDTS)) interacts with ATP. Tyr-87 contributes to the L-citrulline binding site. Residue Gly-117 participates in ATP binding. Residues Thr-119, Asn-123, and Asp-124 each coordinate L-aspartate. Asn-123 contacts L-citrulline. Positions 127, 175, 184, 260, and 272 each coordinate L-citrulline.

Belongs to the argininosuccinate synthase family. Type 1 subfamily. As to quaternary structure, homotetramer.

Its subcellular location is the cytoplasm. It carries out the reaction L-citrulline + L-aspartate + ATP = 2-(N(omega)-L-arginino)succinate + AMP + diphosphate + H(+). Its pathway is amino-acid biosynthesis; L-arginine biosynthesis; L-arginine from L-ornithine and carbamoyl phosphate: step 2/3. This is Argininosuccinate synthase from Bacillus pumilus (strain SAFR-032).